A 322-amino-acid chain; its full sequence is Cytochrome c biogenesis protein CcsA (322 aa).

Transmembrane regions (helical) follow at residues Ile-9–Leu-29, Gly-44–Gly-64, Leu-68–Ile-88, Met-143–Ile-163, Ile-226–Asn-246, Thr-260–His-274, and Ile-289–Ile-309.

It belongs to the CcmF/CycK/Ccl1/NrfE/CcsA family. In terms of assembly, may interact with Ccs1.

The protein localises to the plastid. It localises to the chloroplast thylakoid membrane. Its function is as follows. Required during biogenesis of c-type cytochromes (cytochrome c6 and cytochrome f) at the step of heme attachment. This chain is Cytochrome c biogenesis protein CcsA, found in Hordeum vulgare (Barley).